We begin with the raw amino-acid sequence, 741 residues long: uncharacterized protein (741 aa).

Over residues Met1–Arg17 the composition is skewed to polar residues. The tract at residues Met1 to Pro50 is disordered. Positions Gln18–Leu27 are enriched in basic and acidic residues. An RING-type 1; degenerate zinc finger spans residues Cys107 to Arg150. Composition is skewed to polar residues over residues Gly177–Val193, Pro252–Ser263, and Asn277–Phe302. Disordered stretches follow at residues Gly177–Val214, Ser238–Arg387, Gln500–Thr543, Glu561–His619, Ser638–Gln688, and Arg713–Lys741. A compositionally biased stretch (low complexity) spans Thr316–Thr332. 2 stretches are compositionally biased toward polar residues: residues Asp333–Ala344 and Pro357–Asn386. Polar residues-rich tracts occupy residues Arg563–Val586, Glu604–His619, and Ser652–Pro661. Residues Cys687–Arg736 form an RING-type 2; degenerate zinc finger. A compositionally biased stretch (basic and acidic residues) spans Glu731 to Lys741.

Its subcellular location is the nucleus. This is an uncharacterized protein from Schizosaccharomyces pombe (strain 972 / ATCC 24843) (Fission yeast).